Consider the following 207-residue polypeptide: ATP-dependent Clp protease proteolytic subunit (207 aa).

The active-site Nucleophile is the serine 111. The active site involves histidine 136.

It belongs to the peptidase S14 family. Fourteen ClpP subunits assemble into 2 heptameric rings which stack back to back to give a disk-like structure with a central cavity, resembling the structure of eukaryotic proteasomes.

It is found in the cytoplasm. It catalyses the reaction Hydrolysis of proteins to small peptides in the presence of ATP and magnesium. alpha-casein is the usual test substrate. In the absence of ATP, only oligopeptides shorter than five residues are hydrolyzed (such as succinyl-Leu-Tyr-|-NHMec, and Leu-Tyr-Leu-|-Tyr-Trp, in which cleavage of the -Tyr-|-Leu- and -Tyr-|-Trp bonds also occurs).. Its function is as follows. Cleaves peptides in various proteins in a process that requires ATP hydrolysis. Has a chymotrypsin-like activity. Plays a major role in the degradation of misfolded proteins. The chain is ATP-dependent Clp protease proteolytic subunit from Yersinia pseudotuberculosis serotype O:1b (strain IP 31758).